We begin with the raw amino-acid sequence, 119 residues long: uncharacterized protein (119 aa).

The next 2 membrane-spanning stretches (helical) occupy residues 61–80 (LISA…LLSV) and 87–103 (VVGV…VDII).

It localises to the membrane. This is an uncharacterized protein from Saccharomyces cerevisiae (strain ATCC 204508 / S288c) (Baker's yeast).